A 193-amino-acid polypeptide reads, in one-letter code: Probable gluconokinase (193 aa).

Residue 21–28 (GPAGSGKT) participates in ATP binding.

The protein belongs to the gluconokinase GntK/GntV family.

The catalysed reaction is D-gluconate + ATP = 6-phospho-D-gluconate + ADP + H(+). Its pathway is carbohydrate acid metabolism; D-gluconate degradation. This Schizosaccharomyces pombe (strain 972 / ATCC 24843) (Fission yeast) protein is Probable gluconokinase.